A 304-amino-acid chain; its full sequence is MSPYPRPRWLVTGASGMLGRELTPLLDRRGAAVTALGRGHLDITDGAAVRSAVAEHRPAVVVNCAAWTAVDEAESEPALAMAVNGEGPRHLAQACRAVGAVLLQLSTDYVFPGSGGRPYREDHPTGPRTVYGCTKRAGERAVLEVLPDTGYIVRTAWLYGAGGPNFVAKMIRLEADEDTVLVVDDQHGQPTWTADLADRLAALGAAALAGTAPAGIYHATNTGGTTWNALAPETFRLLGADPARVRPTTSLALARPAVRPRYSVLDQSRWKAAGLEPLRHWRAALTESFPALCGRAGRPVPGPR.

Residues 16-18 (GML), 42-43 (DI), and 66-68 (AWT) contribute to the NADH site. NADPH-binding positions include 17 to 18 (ML), 42 to 43 (DI), and 66 to 68 (AWT). 107-108 (TD) contributes to the dTDP-beta-L-rhamnose binding site. 2 residues coordinate NADH: Tyr-131 and Lys-135. Residues Tyr-131 and Lys-135 each contribute to the NADPH site. The active-site Proton donor/acceptor is the Tyr-131. Trp-157 serves as a coordination point for dTDP-beta-L-rhamnose.

The protein belongs to the dTDP-4-dehydrorhamnose reductase family. In terms of assembly, homodimer. Mg(2+) serves as cofactor.

It carries out the reaction dTDP-beta-L-rhamnose + NADP(+) = dTDP-4-dehydro-beta-L-rhamnose + NADPH + H(+). It participates in carbohydrate biosynthesis; dTDP-L-rhamnose biosynthesis. The protein operates within antibiotic biosynthesis; streptomycin biosynthesis. In terms of biological role, involved in the biosynthesis of the streptose moiety of streptomycin. Catalyzes the reduction of dTDP-6-deoxy-L-lyxo-4-hexulose to yield dTDP-L-rhamnose. RmlD uses NADH and NADPH nearly equally well. The sequence is that of dTDP-4-dehydrorhamnose reductase from Streptomyces griseus.